The sequence spans 106 residues: Replication restart protein PriB (106 aa).

An SSB domain is found at 4–103 (TNRLVLSGTV…LHAEQIEFID (100 aa)).

This sequence belongs to the PriB family. Homodimer. Interacts with PriA and DnaT. Component of the replication restart primosome. Primosome assembly occurs via a 'hand-off' mechanism. PriA binds to replication forks, subsequently PriB then DnaT bind; DnaT then displaces ssDNA to generate the helicase loading substrate.

In terms of biological role, involved in the restart of stalled replication forks, which reloads the replicative helicase on sites other than the origin of replication; the PriA-PriB pathway is the major replication restart pathway. During primosome assembly it facilitates complex formation between PriA and DnaT on DNA; stabilizes PriA on DNA. Stimulates the DNA unwinding activity of PriA helicase. This chain is Replication restart protein PriB, found in Yersinia enterocolitica serotype O:8 / biotype 1B (strain NCTC 13174 / 8081).